A 135-amino-acid polypeptide reads, in one-letter code: ATP synthase epsilon chain (135 aa).

The protein belongs to the ATPase epsilon chain family. F-type ATPases have 2 components, CF(1) - the catalytic core - and CF(0) - the membrane proton channel. CF(1) has five subunits: alpha(3), beta(3), gamma(1), delta(1), epsilon(1). CF(0) has three main subunits: a, b and c.

The protein resides in the cellular thylakoid membrane. Functionally, produces ATP from ADP in the presence of a proton gradient across the membrane. In Prochlorococcus marinus (strain NATL1A), this protein is ATP synthase epsilon chain.